Reading from the N-terminus, the 440-residue chain is UPF0489 protein C5orf22 homolog (440 aa).

The interval Val-187–Met-207 is disordered. The segment covering Glu-188–Glu-200 has biased composition (low complexity).

Belongs to the UPF0489 family.

This is UPF0489 protein C5orf22 homolog from Xenopus tropicalis (Western clawed frog).